The primary structure comprises 567 residues: Proton-coupled zinc antiporter SLC30A9, mitochondrial (567 aa).

5 helical membrane-spanning segments follow: residues 238 to 258 (VVMV…LAWI), 313 to 333 (GVGI…MGLL), 341 to 361 (LLWA…TLLV), 391 to 411 (VILL…TCMG), and 423 to 443 (SLGS…LIYT). The short motif at 461–465 (LTELL) is the LXXLL motif element.

It belongs to the cation diffusion facilitator (CDF) transporter (TC 2.A.4) family. SLC30A subfamily. Interacts with GRIP1, ESR1, AR and CTNNB1.

Its subcellular location is the mitochondrion membrane. The protein resides in the nucleus. It localises to the endoplasmic reticulum. The enzyme catalyses Zn(2+)(in) + 2 H(+)(out) = Zn(2+)(out) + 2 H(+)(in). In terms of biological role, acts as a zinc transporter involved in intracellular zinc homeostasis. Functions as a secondary coactivator for nuclear receptors by cooperating with p160 coactivators subtypes. Plays a role in transcriptional activation of Wnt-responsive genes. Mitochondrial proton-coupled zinc ion antiporter mediating the export of zinc from the mitochondria and involved in zinc homeostasis, zinc mobilization as well as mitochondrial morphology and health. In nucleus, functions as a secondary coactivator for nuclear receptors by cooperating with p160 coactivators subtypes. Plays a role in transcriptional activation of Wnt-responsive genes. This is Proton-coupled zinc antiporter SLC30A9, mitochondrial (Slc30a9) from Mus musculus (Mouse).